We begin with the raw amino-acid sequence, 255 residues long: Imidazole glycerol phosphate synthase subunit HisF (255 aa).

Active-site residues include aspartate 11 and aspartate 130.

This sequence belongs to the HisA/HisF family. Heterodimer of HisH and HisF.

The protein localises to the cytoplasm. The enzyme catalyses 5-[(5-phospho-1-deoxy-D-ribulos-1-ylimino)methylamino]-1-(5-phospho-beta-D-ribosyl)imidazole-4-carboxamide + L-glutamine = D-erythro-1-(imidazol-4-yl)glycerol 3-phosphate + 5-amino-1-(5-phospho-beta-D-ribosyl)imidazole-4-carboxamide + L-glutamate + H(+). Its pathway is amino-acid biosynthesis; L-histidine biosynthesis; L-histidine from 5-phospho-alpha-D-ribose 1-diphosphate: step 5/9. IGPS catalyzes the conversion of PRFAR and glutamine to IGP, AICAR and glutamate. The HisF subunit catalyzes the cyclization activity that produces IGP and AICAR from PRFAR using the ammonia provided by the HisH subunit. In Rhodopseudomonas palustris (strain BisB5), this protein is Imidazole glycerol phosphate synthase subunit HisF.